A 77-amino-acid chain; its full sequence is Large ribosomal subunit protein uL24 (77 aa).

A disordered region spans residues 42 to 61; sequence KKHQKPSQTNANGGVVESEG.

Belongs to the universal ribosomal protein uL24 family. In terms of assembly, part of the 50S ribosomal subunit.

In terms of biological role, one of two assembly initiator proteins, it binds directly to the 5'-end of the 23S rRNA, where it nucleates assembly of the 50S subunit. Its function is as follows. One of the proteins that surrounds the polypeptide exit tunnel on the outside of the subunit. This chain is Large ribosomal subunit protein uL24, found in Lactobacillus helveticus (strain DPC 4571).